The chain runs to 590 residues: Cytosolic Fe-S cluster assembly factor nar1 (590 aa).

Residues Cys20, Cys62, Cys65, Cys68, Cys214, Cys269, Cys456, and Cys460 each contribute to the [4Fe-4S] cluster site.

Belongs to the NARF family.

In terms of biological role, component of the cytosolic Fe/S protein assembly machinery. Required for maturation of extramitochondrial Fe/S proteins. May play a role in the transfer of pre-assembled Fe/S clusters to target apoproteins. The sequence is that of Cytosolic Fe-S cluster assembly factor nar1 (nar1) from Talaromyces marneffei (strain ATCC 18224 / CBS 334.59 / QM 7333) (Penicillium marneffei).